We begin with the raw amino-acid sequence, 523 residues long: MTDIHAQRILILDFGSQYTQLIARRVREIGVYCEIRAFDMTAEELAEFAPKGIILSGGPESVTAAQTPRAPQAVFEAGIPVLGICYGMQTMAEQLGGKVIAGEKHEFGYARVEKAEPNALLDGIVDHEEQGKEFLDVWMSHGDRVGEMPAGFVATATTGSCPIAGMANDEKRFYGIQFHPEVTHTLQGGRLLERFIRELCECEALWTPSNIISDAIDTIREQVGTDEVILGLSGGVDSSVVAALLHKAIGDQLTCVFVDNGLLRHQEGDQVMEMFADNMGVKVIRVDAEDNFLGKLAGEADPEKKRKIIGNTFIDIFDDEASKLQNANWLAQGTIYPDVIESAASKTGKAHVIKSHHNVGGLPEDMKLKLVEPLRELFKDEVRKIGLELGLPYDMVYRHPFPGPGLGVRILGEVKKEYADTLRLADHIFIEELRAAGLYHKTSQAFAVFLPVKSVGVVGDARRYEYVVALRAVETIDFMTARWAHLPYDFLELVSSRIINEIPGISRVTYDISSKPPATIEWE.

Positions 8 to 205 (RILILDFGSQ…IRELCECEAL (198 aa)) constitute a Glutamine amidotransferase type-1 domain. The Nucleophile role is filled by Cys85. Active-site residues include His179 and Glu181. The region spanning 206-398 (WTPSNIISDA…LGLPYDMVYR (193 aa)) is the GMPS ATP-PPase domain. Residue 233–239 (SGGVDSS) coordinates ATP.

Homodimer.

It catalyses the reaction XMP + L-glutamine + ATP + H2O = GMP + L-glutamate + AMP + diphosphate + 2 H(+). It participates in purine metabolism; GMP biosynthesis; GMP from XMP (L-Gln route): step 1/1. Catalyzes the synthesis of GMP from XMP. The chain is GMP synthase [glutamine-hydrolyzing] from Alcanivorax borkumensis (strain ATCC 700651 / DSM 11573 / NCIMB 13689 / SK2).